A 421-amino-acid polypeptide reads, in one-letter code: Eukaryotic translation initiation factor 3 subunit E (421 aa).

In terms of domain architecture, PCI spans 215–394 (FFQNDTKGKD…STVILNHPSV (180 aa)).

Belongs to the eIF-3 subunit E family. Component of the eukaryotic translation initiation factor 3 (eIF-3) complex.

It is found in the cytoplasm. Component of the eukaryotic translation initiation factor 3 (eIF-3) complex, which is involved in protein synthesis of a specialized repertoire of mRNAs and, together with other initiation factors, stimulates binding of mRNA and methionyl-tRNAi to the 40S ribosome. The eIF-3 complex specifically targets and initiates translation of a subset of mRNAs involved in cell proliferation. In Yarrowia lipolytica (strain CLIB 122 / E 150) (Yeast), this protein is Eukaryotic translation initiation factor 3 subunit E.